Consider the following 168-residue polypeptide: Probable chorismate pyruvate-lyase (168 aa).

The substrate site is built by arginine 75, isoleucine 114, and glutamate 155.

The protein belongs to the UbiC family.

The protein resides in the cytoplasm. It catalyses the reaction chorismate = 4-hydroxybenzoate + pyruvate. The protein operates within cofactor biosynthesis; ubiquinone biosynthesis. Functionally, removes the pyruvyl group from chorismate, with concomitant aromatization of the ring, to provide 4-hydroxybenzoate (4HB) for the ubiquinone pathway. The protein is Probable chorismate pyruvate-lyase of Psychrobacter arcticus (strain DSM 17307 / VKM B-2377 / 273-4).